The sequence spans 188 residues: NADH-quinone oxidoreductase subunit I (188 aa).

4Fe-4S ferredoxin-type domains lie at 44–74 (LNRY…VEGA) and 90–119 (QVYQ…MTNE). [4Fe-4S] cluster contacts are provided by Cys54, Cys57, Cys60, Cys64, Cys99, Cys102, Cys105, and Cys109. Residues 167 to 188 (TGGAAAAAQDESEVDDTAGDRP) form a disordered region. Residues 176-188 (DESEVDDTAGDRP) are compositionally biased toward acidic residues.

This sequence belongs to the complex I 23 kDa subunit family. NDH-1 is composed of 14 different subunits. Subunits NuoA, H, J, K, L, M, N constitute the membrane sector of the complex. [4Fe-4S] cluster serves as cofactor.

Its subcellular location is the cell membrane. It catalyses the reaction a quinone + NADH + 5 H(+)(in) = a quinol + NAD(+) + 4 H(+)(out). Its function is as follows. NDH-1 shuttles electrons from NADH, via FMN and iron-sulfur (Fe-S) centers, to quinones in the respiratory chain. The immediate electron acceptor for the enzyme in this species is believed to be ubiquinone. Couples the redox reaction to proton translocation (for every two electrons transferred, four hydrogen ions are translocated across the cytoplasmic membrane), and thus conserves the redox energy in a proton gradient. This Rhodococcus jostii (strain RHA1) protein is NADH-quinone oxidoreductase subunit I.